A 504-amino-acid chain; its full sequence is E3 ubiquitin-protein ligase dbl4 (504 aa).

The interval 127 to 338 is TRIAD supradomain; the sequence is HEGTCEICYD…NNWYTCNRYE (212 aa). 18 residues coordinate Zn(2+): Cys131, Cys134, Cys147, His149, Cys152, Cys155, Cys173, Cys178, Cys217, Cys222, Cys244, Cys246, Cys251, Cys254, His259, Cys264, Cys291, and Cys294. The RING-type 1 zinc-finger motif lies at 131–178; that stretch reads CEICYDEGCLPFFSAECDHEFCLACYRQYLDSRISEGESVIQCPEESC. The IBR-type zinc-finger motif lies at 197-264; it reads DRYHRLLDRS…GHDNHQPTIC (68 aa). The RING-type 2; atypical zinc-finger motif lies at 291–320; the sequence is CPKCSTTIEKNGGCNHMTCKKCKYEFCWVC. The active site involves Cys304. Residues Cys309, Cys312, Cys317, Cys320, His327, and Cys334 each contribute to the Zn(2+) site.

It belongs to the RBR family.

It localises to the cytoplasm. The protein resides in the nucleus. It carries out the reaction [E2 ubiquitin-conjugating enzyme]-S-ubiquitinyl-L-cysteine + [acceptor protein]-L-lysine = [E2 ubiquitin-conjugating enzyme]-L-cysteine + [acceptor protein]-N(6)-ubiquitinyl-L-lysine.. It participates in protein modification; protein ubiquitination. Its function is as follows. Probable ubiquitin-protein ligase involved in the degradation-related ubiquitination of histones. Contributes to the post-translational regulation of histone protein levels by polyubiquitination of excess histones for subsequent degradation. The chain is E3 ubiquitin-protein ligase dbl4 from Schizosaccharomyces pombe (strain 972 / ATCC 24843) (Fission yeast).